Reading from the N-terminus, the 277-residue chain is Glycerol-3-phosphate acyltransferase (277 aa).

The next 5 membrane-spanning stretches (helical) occupy residues Phe-3–Val-23, Ile-55–Leu-75, Pro-79–Phe-99, Ile-111–Leu-131, and Leu-155–Leu-175. A disordered region spans residues Lys-231–Glu-277. Basic residues-rich tracts occupy residues Lys-240–Thr-253 and Lys-262–Lys-271.

The protein belongs to the PlsY family. In terms of assembly, probably interacts with PlsX.

Its subcellular location is the cell inner membrane. The catalysed reaction is an acyl phosphate + sn-glycerol 3-phosphate = a 1-acyl-sn-glycero-3-phosphate + phosphate. It functions in the pathway lipid metabolism; phospholipid metabolism. Its function is as follows. Catalyzes the transfer of an acyl group from acyl-phosphate (acyl-PO(4)) to glycerol-3-phosphate (G3P) to form lysophosphatidic acid (LPA). This enzyme utilizes acyl-phosphate as fatty acyl donor, but not acyl-CoA or acyl-ACP. The sequence is that of Glycerol-3-phosphate acyltransferase from Legionella pneumophila (strain Lens).